The chain runs to 312 residues: Dehydrin CAS31 (312 aa).

Disordered regions lie at residues 1 to 88 (MSQY…HTGG) and 248 to 287 (GTEQ…HHGE). Residues 21-30 (PLTSQGQVDQ) are compositionally biased toward polar residues. Residues 35-46 (ISGGGMTGATGH) show a composition bias toward gly residues. Positions 55 to 66 (HGVGVDQTTGFG) are enriched in low complexity. Gly residues-rich tracts occupy residues 67–88 (SNTG…HTGG) and 256–278 (TGTG…GTTG).

Belongs to the plant dehydrin family. As to quaternary structure, interacts with the leghemoglobin LB120-1 in the cytoplasm; this interaction leads to LB120-1 protection from denaturation under thermal and drought stresses. As to expression, expressed in nodules and roots.

The protein localises to the cytoplasm. Functionally, intrinsically disordered protein acting as a chaperone. Ensures leghemoglobins (e.g. LB120-1) protection from denaturation under thermal and drought stresses to delay root nodule nitrogenase inactivation and subsequent nodule senescence, thus supporting symbiotic nitrogen fixation (SNF). The chain is Dehydrin CAS31 from Medicago truncatula (Barrel medic).